A 477-amino-acid polypeptide reads, in one-letter code: Aspartyl/glutamyl-tRNA(Asn/Gln) amidotransferase subunit B (477 aa).

Belongs to the GatB/GatE family. GatB subfamily. In terms of assembly, heterotrimer of A, B and C subunits.

The catalysed reaction is L-glutamyl-tRNA(Gln) + L-glutamine + ATP + H2O = L-glutaminyl-tRNA(Gln) + L-glutamate + ADP + phosphate + H(+). The enzyme catalyses L-aspartyl-tRNA(Asn) + L-glutamine + ATP + H2O = L-asparaginyl-tRNA(Asn) + L-glutamate + ADP + phosphate + 2 H(+). Its function is as follows. Allows the formation of correctly charged Asn-tRNA(Asn) or Gln-tRNA(Gln) through the transamidation of misacylated Asp-tRNA(Asn) or Glu-tRNA(Gln) in organisms which lack either or both of asparaginyl-tRNA or glutaminyl-tRNA synthetases. The reaction takes place in the presence of glutamine and ATP through an activated phospho-Asp-tRNA(Asn) or phospho-Glu-tRNA(Gln). This chain is Aspartyl/glutamyl-tRNA(Asn/Gln) amidotransferase subunit B, found in Clostridium tetani (strain Massachusetts / E88).